Reading from the N-terminus, the 231-residue chain is Ribosomal RNA small subunit methyltransferase G (231 aa).

S-adenosyl-L-methionine-binding residues include G85, F90, and R154.

This sequence belongs to the methyltransferase superfamily. RNA methyltransferase RsmG family.

Its subcellular location is the cytoplasm. The enzyme catalyses guanosine(527) in 16S rRNA + S-adenosyl-L-methionine = N(7)-methylguanosine(527) in 16S rRNA + S-adenosyl-L-homocysteine. Functionally, specifically methylates the N7 position of guanine in position 527 of 16S rRNA. This Rhodopseudomonas palustris (strain BisA53) protein is Ribosomal RNA small subunit methyltransferase G.